Reading from the N-terminus, the 353-residue chain is MTAILERRESTSLWGRFCNWITSTENRLYIGWFGVLMIPTLLTATSVFIIAFIAAPPVDIDGIREPVSGSLLYGNNIISGAIIPTSAAIGLHFYPIWEAASVDEWLYNGGPYELIVLHFLLGVACYMGREWELSFRLGMRPWIAVAYSAPVAAATAVFLIYPIGQGSFSDGMPLGISGTFNFMIVFQAEHNILMHPFHMLGVAGVFGGSLFSAMHGSLVTSSLIRETTENESANEGYRFGQEEETYNIVAAHGYFGRLIFQYASFNNSRSLHFFLAAWPVVGIWFTALGISTMAFNLNGFNFNQSVVDSQGRVINTWADIINRANLGMEVMHERNAHNFPLDLAAVEAPSTNG.

Residue threonine 2 is modified to N-acetylthreonine. A Phosphothreonine modification is found at threonine 2. 3 helical membrane-spanning segments follow: residues 29–46 (YIGWFGVLMIPTLLTATS), 118–133 (HFLLGVACYMGREWEL), and 142–156 (WIAVAYSAPVAAATA). Histidine 118 is a chlorophyll a binding site. Residue tyrosine 126 coordinates pheophytin a. Residues aspartate 170 and glutamate 189 each coordinate [CaMn4O5] cluster. The chain crosses the membrane as a helical span at residues 197 to 218 (FHMLGVAGVFGGSLFSAMHGSL). Residue histidine 198 participates in chlorophyll a binding. A quinone-binding positions include histidine 215 and 264–265 (SF). Histidine 215 contributes to the Fe cation binding site. Histidine 272 serves as a coordination point for Fe cation. Residues 274 to 288 (FLAAWPVVGIWFTAL) traverse the membrane as a helical segment. [CaMn4O5] cluster contacts are provided by histidine 332, glutamate 333, aspartate 342, and alanine 344. The propeptide occupies 345–353 (AVEAPSTNG).

It belongs to the reaction center PufL/M/PsbA/D family. In terms of assembly, PSII is composed of 1 copy each of membrane proteins PsbA, PsbB, PsbC, PsbD, PsbE, PsbF, PsbH, PsbI, PsbJ, PsbK, PsbL, PsbM, PsbT, PsbX, PsbY, PsbZ, Psb30/Ycf12, at least 3 peripheral proteins of the oxygen-evolving complex and a large number of cofactors. It forms dimeric complexes. The D1/D2 heterodimer binds P680, chlorophylls that are the primary electron donor of PSII, and subsequent electron acceptors. It shares a non-heme iron and each subunit binds pheophytin, quinone, additional chlorophylls, carotenoids and lipids. D1 provides most of the ligands for the Mn4-Ca-O5 cluster of the oxygen-evolving complex (OEC). There is also a Cl(-1) ion associated with D1 and D2, which is required for oxygen evolution. The PSII complex binds additional chlorophylls, carotenoids and specific lipids. serves as cofactor. Tyr-161 forms a radical intermediate that is referred to as redox-active TyrZ, YZ or Y-Z. In terms of processing, C-terminally processed by CTPA; processing is essential to allow assembly of the oxygen-evolving complex and thus photosynthetic growth.

It localises to the plastid. The protein localises to the chloroplast thylakoid membrane. The enzyme catalyses 2 a plastoquinone + 4 hnu + 2 H2O = 2 a plastoquinol + O2. Its function is as follows. Photosystem II (PSII) is a light-driven water:plastoquinone oxidoreductase that uses light energy to abstract electrons from H(2)O, generating O(2) and a proton gradient subsequently used for ATP formation. It consists of a core antenna complex that captures photons, and an electron transfer chain that converts photonic excitation into a charge separation. The D1/D2 (PsbA/PsbD) reaction center heterodimer binds P680, the primary electron donor of PSII as well as several subsequent electron acceptors. This chain is Photosystem II protein D1, found in Drimys granadensis.